We begin with the raw amino-acid sequence, 132 residues long: Agouti-signaling protein (132 aa).

An N-terminal signal peptide occupies residues 1 to 22 (MDVTRLVLATLLVFLCFFAAYS). N-linked (GlcNAc...) asparagine glycosylation is present at Asn39. The disordered stretch occupies residues 60–93 (KKISRKEAEKRRSSKKEASKQKVARPRTPLSVPC). Residues 64–79 (RKEAEKRRSSKKEASK) are compositionally biased toward basic and acidic residues. 5 disulfide bridges follow: Cys93-Cys108, Cys100-Cys114, Cys107-Cys125, Cys111-Cys132, and Cys116-Cys123. The Agouti domain maps to 93–132 (CVSTRGSCKPPAPACCHPCASCQCRFFRSACSCRVLNVNC).

The protein resides in the secreted. In terms of biological role, involved in the regulation of melanogenesis. The binding of ASP to MC1R precludes alpha-MSH initiated signaling and thus blocks production of cAMP, leading to a down-regulation of eumelanogenesis (brown/black pigment) and thus increasing synthesis of pheomelanin (yellow/red pigment). The polypeptide is Agouti-signaling protein (ASIP) (Cebuella pygmaea (Pygmy marmoset)).